We begin with the raw amino-acid sequence, 299 residues long: Single myb histone 1 (299 aa).

The HTH myb-type domain maps to Met1 to Gly61. The segment at residues Trp28–Ser57 is a DNA-binding region (H-T-H motif). Residues Ser124 to Pro192 form the H15 domain. Residues Glu238 to Leu279 are a coiled coil.

It belongs to the histone H1/H5 family. SMH subfamily. As to quaternary structure, forms a homodimer and heterodimers. Expressed in leaves.

The protein localises to the nucleus. It localises to the chromosome. The protein resides in the nucleolus. Its subcellular location is the telomere. Functionally, binds preferentially double-stranded telomeric repeats 5'-TTTAGGG-3', but can also bind to the single G-rich and C-rich telomeric strand. This Zea mays (Maize) protein is Single myb histone 1 (SMH1).